We begin with the raw amino-acid sequence, 781 residues long: MSKKFIELGDPVTQDEKDYEDYVGVGFAHQVPTMKRRKLTEHGNTTESKEDPEEPKSRDVFVSSQSSDESQEDSAENPEIAKEVSENCENLTETLKISNIESLDNVTERSEHTLDNHKSTEPMEEDVNNKSNIDVAINSDEDDELVLEENNKEMRDGEQVQQDLFADDQELIEYPGIMKDTTTQLDITDSEVETAQKMEMIEETEADSTFVGEDSKNQRQSGTTSDEVDADSQINLATKTVRTSSSSFLSTVSTCEAPAKGRARMYQKELEKHVIAFTEGNLTLQPDLNKVDPDRNYRYCTIPNFPASQGKLREDNRYGPKIVLPQRWREFDSRGRRRDSYFYFKRKLDGYLKCYKTTGYFMFVGLLHNMWEFDPDITYKLPALEMYYKEMSELVGREEVLEKFARVARIAKTAEDILPERIYRLVGDVESATLSHKQCAALVARMFFARPDSPFSFCRILSSDKSICVEKLKFLFTYFDKMSMDPPDGAVSFRLTKMDKDTFNEEWKDKKLRSLPEVEFFDEMLIEDTALCTQVDFANEHLGGGVLNHGSVQEEIRFLMCPEMMVGMLLCEKMKQLEAISIVGAYVFSSYTGYGHTLKWAELQPNHSRQNTNEFRDRFGRLRVETIAIDAILFKGSKLDCQTEQLNKANIIREMKKASIGFMSQGPKFTNIPIVTGWWGCGAFNGDKPLKFIIQVIAAGVADRPLHFCSFGEPELAAKCKKIIERMKQKDVTLGMLFSMINNTGLPHKHFEFYVFDRISTYLSSSEDVESSKSSPSVSRA.

3 disordered regions span residues 28–87 (AHQV…VSEN), 102–131 (SLDN…NNKS), and 206–232 (ADST…DADS). The segment covering 106-121 (VTERSEHTLDNHKSTE) has biased composition (basic and acidic residues).

Belongs to the poly(ADP-ribose) glycohydrolase family. Expressed in head and tail neurons. Also detected in the central nerve cord and motor neurons.

The protein localises to the nucleus. It catalyses the reaction [(1''-&gt;2')-ADP-alpha-D-ribose](n) + H2O = [(1''-&gt;2')-ADP-alpha-D-ribose](n-1) + ADP-D-ribose. In terms of biological role, poly(ADP-ribose) synthesized after DNA damage is only present transiently and is rapidly degraded by poly(ADP-ribose) glycohydrolase. Poly(ADP-ribose) metabolism may be required for maintenance of the normal function of neuronal cells. The protein is Poly(ADP-ribose) glycohydrolase 1 of Caenorhabditis elegans.